A 342-amino-acid polypeptide reads, in one-letter code: tRNA N6-adenosine threonylcarbamoyltransferase (342 aa).

Residues H111 and H115 each contribute to the Fe cation site. Residues 133 to 137 (VVSGG), D166, G179, D183, and N273 contribute to the substrate site. Residue D301 participates in Fe cation binding.

Belongs to the KAE1 / TsaD family. Fe(2+) is required as a cofactor.

It localises to the cytoplasm. It catalyses the reaction L-threonylcarbamoyladenylate + adenosine(37) in tRNA = N(6)-L-threonylcarbamoyladenosine(37) in tRNA + AMP + H(+). Its function is as follows. Required for the formation of a threonylcarbamoyl group on adenosine at position 37 (t(6)A37) in tRNAs that read codons beginning with adenine. Is involved in the transfer of the threonylcarbamoyl moiety of threonylcarbamoyl-AMP (TC-AMP) to the N6 group of A37, together with TsaE and TsaB. TsaD likely plays a direct catalytic role in this reaction. The protein is tRNA N6-adenosine threonylcarbamoyltransferase of Trichlorobacter lovleyi (strain ATCC BAA-1151 / DSM 17278 / SZ) (Geobacter lovleyi).